A 308-amino-acid chain; its full sequence is Glycine-rich protein GRP33 (308 aa).

The KH domain occupies 83-118 (DQFPKYNFLGKLLGPGGSTMKQLQDETMTKISILGR). Gly residues-rich tracts occupy residues 203–220 (GPMG…GGFS) and 273–294 (RGAG…GGGK). Disordered stretches follow at residues 203 to 222 (GPMG…FSGP) and 270 to 308 (SPGR…AAPY).

In terms of processing, the arginines in the Gly-rich domain might be methylated.

This is Glycine-rich protein GRP33 from Artemia salina (Brine shrimp).